Reading from the N-terminus, the 123-residue chain is MPTINQLIAKPRVLQKSRKKVPALQQSPQKRGVCTRVYTTTPKKPNSALRKVAKVRLTNGFEVIGYIPGEGHNLQEHSVVMIRGGRVKDLPGVRYHILRGVLDTQGVKNRKQRRSKYGAKRPK.

A 3-methylthioaspartic acid modification is found at aspartate 89.

This sequence belongs to the universal ribosomal protein uS12 family. In terms of assembly, part of the 30S ribosomal subunit. Contacts proteins S8 and S17. May interact with IF1 in the 30S initiation complex.

In terms of biological role, with S4 and S5 plays an important role in translational accuracy. Functionally, interacts with and stabilizes bases of the 16S rRNA that are involved in tRNA selection in the A site and with the mRNA backbone. Located at the interface of the 30S and 50S subunits, it traverses the body of the 30S subunit contacting proteins on the other side and probably holding the rRNA structure together. The combined cluster of proteins S8, S12 and S17 appears to hold together the shoulder and platform of the 30S subunit. In Afipia carboxidovorans (strain ATCC 49405 / DSM 1227 / KCTC 32145 / OM5) (Oligotropha carboxidovorans), this protein is Small ribosomal subunit protein uS12.